The primary structure comprises 983 residues: Chaperone protein ClpB3, mitochondrial (983 aa).

Residues 1-87 (MSRATAVSRL…LFHPTQAARY (87 aa)) constitute a mitochondrion transit peptide. Positions 97 to 240 (PGEFTEMAWE…KEAISAVRGS (144 aa)) constitute a Clp R domain. Repeat regions lie at residues 100–165 (FTEM…ISRQ) and 177–240 (IGSS…VRGS). Residues 255–503 (LEKYGIDMTE…KLKMEITSKP (249 aa)) are i. ATP is bound at residue 300-307 (GEPGVGKT). The stretch at 504–627 (IELDEVDREI…QQSGKSMLRE (124 aa)) forms a coiled coil. Residues 629 to 820 (VTDVDIAEIV…VIIMTSNIGS (192 aa)) form an II region. 703–710 (GPTGVGKT) is an ATP binding site.

Belongs to the ClpA/ClpB family.

Its subcellular location is the mitochondrion. In terms of biological role, molecular chaperone that may not be involved in heat stress response or tolerance. This chain is Chaperone protein ClpB3, mitochondrial (CLPB3), found in Oryza sativa subsp. japonica (Rice).